The primary structure comprises 139 residues: Nucleoside diphosphate kinase (139 aa).

Positions 11, 59, 87, 93, 104, and 114 each coordinate ATP. His-117 acts as the Pros-phosphohistidine intermediate in catalysis.

This sequence belongs to the NDK family. As to quaternary structure, homotetramer. The cofactor is Mg(2+).

It localises to the cytoplasm. The catalysed reaction is a 2'-deoxyribonucleoside 5'-diphosphate + ATP = a 2'-deoxyribonucleoside 5'-triphosphate + ADP. It carries out the reaction a ribonucleoside 5'-diphosphate + ATP = a ribonucleoside 5'-triphosphate + ADP. Its function is as follows. Major role in the synthesis of nucleoside triphosphates other than ATP. The ATP gamma phosphate is transferred to the NDP beta phosphate via a ping-pong mechanism, using a phosphorylated active-site intermediate. The protein is Nucleoside diphosphate kinase of Flavobacterium johnsoniae (strain ATCC 17061 / DSM 2064 / JCM 8514 / BCRC 14874 / CCUG 350202 / NBRC 14942 / NCIMB 11054 / UW101) (Cytophaga johnsonae).